We begin with the raw amino-acid sequence, 806 residues long: Leucine--tRNA ligase (806 aa).

Positions 40–51 (PYPSGTGLHVGH) match the 'HIGH' region motif. Residues 576-580 (KMSKS) carry the 'KMSKS' region motif. ATP is bound at residue Lys579.

This sequence belongs to the class-I aminoacyl-tRNA synthetase family.

Its subcellular location is the cytoplasm. It catalyses the reaction tRNA(Leu) + L-leucine + ATP = L-leucyl-tRNA(Leu) + AMP + diphosphate. The polypeptide is Leucine--tRNA ligase (Prosthecochloris aestuarii (strain DSM 271 / SK 413)).